A 1253-amino-acid chain; its full sequence is Myosin heavy chain 95F (1253 aa).

In terms of domain architecture, Myosin N-terminal SH3-like spans 3–54; the sequence is EDTQLVWVRDAAEGYIQGRITEIGAKEFEVTPTDRKYPKRTCHFDDIHSSCD. A Myosin motor domain is found at 57–766; it reads QDHDDNCELM…KFVEFDRIMR (710 aa). 151-158 is an ATP binding site; it reads GESGAGKT. The actin-binding stretch occupies residues 647–666; the sequence is GELMEKLEQNGTNFIRCIKP. The region spanning 808 to 837 is the IQ domain; the sequence is RNKCVLIAQRIARGFLARKQHRPRYQGIGK. The stretch at 900 to 1022 forms a coiled coil; the sequence is ANMNKLTVDL…LRLANESNGQ (123 aa). The hydrophobic region stretch occupies residues 1187–1193; the sequence is PILLVAG. Residues 1233–1253 are disordered; it reads AYKNLGAAKPNGPAAAMQKQQ.

Belongs to the TRAFAC class myosin-kinesin ATPase superfamily. Myosin family. Isoform B is present at a higher level in the head and gonads than in the thoraxes. Isoform 145 kDa is found only in the head. CLIP-190 and jar are coexpressed at several times in development and in a number of tissues, including embryonic axonal neuron processes and posterior pole.

The protein resides in the cytoplasm. The protein localises to the cytoskeleton. In terms of biological role, myosin is a protein that binds to actin and has ATPase activity that is activated by actin. Together CLIP-190 and jar may coordinate the interaction between the actin and microtubule cytoskeleton. May link endocytic vesicles to microtubules and may be involved in transport in the early embryo and in the dynamic process of dorsal closure. It is believed that its function changes during the life cycle. The chain is Myosin heavy chain 95F (jar) from Drosophila melanogaster (Fruit fly).